The sequence spans 80 residues: Acyl carrier protein (80 aa).

The Carrier domain maps to 2 to 77 (KNIEERIKKI…KSIDFIQNKN (76 aa)). The residue at position 37 (S37) is an O-(pantetheine 4'-phosphoryl)serine.

Belongs to the acyl carrier protein (ACP) family. Post-translationally, 4'-phosphopantetheine is transferred from CoA to a specific serine of apo-ACP by AcpS. This modification is essential for activity because fatty acids are bound in thioester linkage to the sulfhydryl of the prosthetic group.

Its subcellular location is the cytoplasm. It functions in the pathway lipid metabolism; fatty acid biosynthesis. Functionally, carrier of the growing fatty acid chain in fatty acid biosynthesis. The sequence is that of Acyl carrier protein from Buchnera aphidicola subsp. Acyrthosiphon pisum (strain 5A).